Reading from the N-terminus, the 277-residue chain is Phosphonoacetaldehyde hydrolase (277 aa).

Residue Asp-20 is the Nucleophile of the active site. 2 residues coordinate Mg(2+): Asp-20 and Ala-22. The active-site Schiff-base intermediate with substrate is Lys-61. A Mg(2+)-binding site is contributed by Asp-194.

The protein belongs to the HAD-like hydrolase superfamily. PhnX family. In terms of assembly, homodimer. The cofactor is Mg(2+).

It carries out the reaction phosphonoacetaldehyde + H2O = acetaldehyde + phosphate + H(+). Involved in phosphonate degradation. The protein is Phosphonoacetaldehyde hydrolase of Syntrophobacter fumaroxidans (strain DSM 10017 / MPOB).